The primary structure comprises 179 residues: SCAN domain-containing protein 1 (179 aa).

Residues 1 to 104 are disordered; it reads MAATEPILAA…PGPAGSRLGP (104 aa). The span at 52–80 shows a compositional bias: low complexity; the sequence is SPNAAVPEAIPTPRAAASAALELPLGPAP. Positions 108–166 constitute an SCAN box domain; that stretch reads RQRFRQFRYQDAAGPREAFRQLRELSRQWLRPDIRTKEQIVEMLVQEQLLAILPEAARA.

As to quaternary structure, interacts with ZNF202.

It is found in the nucleus. In terms of biological role, may regulate transcriptional activity. This chain is SCAN domain-containing protein 1 (SCAND1), found in Homo sapiens (Human).